Here is a 171-residue protein sequence, read N- to C-terminus: uncharacterized protein (171 aa).

A PfpI endopeptidase domain is found at 3 to 171 (KKVAIILANE…FNREIVKQLQ (169 aa)).

The protein belongs to the peptidase C56 family.

This is an uncharacterized protein from Staphylococcus aureus (strain MRSA252).